A 383-amino-acid polypeptide reads, in one-letter code: MLFPISKQALSCPHFDSCAGCSHQLFVEPPIWREVIENFKETLNPILHQGTLTGWRCRAKLAVRGTKQNPIIGLFKKGSHEALNIPFCLVHHPRINQAVTMIQNWMERHQLNPYQEHSQAGDLRYLQFVVERASGKVQIVFVLNFKDFSSPESQIWRKLLLELAQETTNAFWHSIWVNFNPHATNTIFTDKWEKVWGEPYLWESFDGVKICFQPSNFAQANLDLFEKLLKKVKSWVREKAKVVEFFAGVGTIGLSVAAKCSWIKCEEINPHSKECFYYAKQQLSSEISQKIMFYTGSADENLNLLQGADTVIVDPPRKGLSRKFIEGLTQSSVDQLIYVSCGWDSFKKNKETLISQGWNLKKLEGYSLFPGSEHIELLTLFER.

Residues Cys-12, Cys-18, Cys-21, and Cys-88 each coordinate [4Fe-4S] cluster. S-adenosyl-L-methionine contacts are provided by Gln-219, Phe-246, Glu-267, and Asp-314. Cys-341 functions as the Nucleophile in the catalytic mechanism.

Belongs to the class I-like SAM-binding methyltransferase superfamily. RNA M5U methyltransferase family.

This is an uncharacterized protein from Protochlamydia amoebophila (strain UWE25).